We begin with the raw amino-acid sequence, 501 residues long: MLLSLLVIIPFLSGIFSFFSFRFQKNIPRWIALTGMGLTLLTVIRIWFFEDYYTYQIQSYTHLSYQLILPWISSFGIQFHIAVDGFSIVMLFLTLFLGIIAILCSWNEIKKNEGFFYLNIMLVLMGTIGVFIAFDLFLFFFFWEIILIPMYFLISLWNQKKEDKKKCINIANKFFIYTQISGLIMLASILLLVLNYYINNKILTFNYDLLLIQPVDKSIEYIIMLGFFLAFIIKMPIVPFHGWLADFHERSPYCGAVDIIGALLKTAPYGLLRYNKMLFPNATEQFAPIAIFLGFLSMFYGAWVAFSQVNIKRLIAYSSISHMGLMLIAIYGGNEISFQGLIIQILSNSISTSALFILSGQIYKYLKTQDISEMGGLWTNIYWIPGFSLFFALSNLGIPGTGNFIGEFLILFGIFKEHPLVSIISTIGIIFSSIYSLNMIQKIYYGLSKHDFPKFFLNIKEFWISIVLIFALIFLGLIPQKILNISFESIHFIYNFSKRIQ.

A run of 14 helical transmembrane segments spans residues 1-21 (MLLS…FFSF), 30-50 (WIAL…WFFE), 86-106 (FSIV…LCSW), 115-134 (FFYL…FIAF), 139-156 (FFFF…LISL), 174-194 (FFIY…LLVL), 222-242 (IIML…PFHG), 252-272 (PYCG…YGLL), 286-306 (FAPI…WVAF), 314-331 (LIAY…IAIY), 341-363 (LIIQ…GQIY), 374-394 (MGGL…FALS), 420-440 (LVSI…LNMI), and 459-479 (IKEF…GLIP).

This sequence belongs to the complex I subunit 4 family. As to quaternary structure, composed of 13 different subunits. Subunits NuoA, H, J, K, L, M, N constitute the membrane sector of the complex.

The protein localises to the cell membrane. The catalysed reaction is a quinone + NADH + 5 H(+)(in) = a quinol + NAD(+) + 4 H(+)(out). NDH-1 shuttles electrons from NADH, via FMN and iron-sulfur (Fe-S) centers, to quinones in the respiratory chain. Couples the redox reaction to proton translocation (for every two electrons transferred, four hydrogen ions are translocated across the cytoplasmic membrane), and thus conserves the redox energy in a proton gradient. The polypeptide is NADH-quinone oxidoreductase subunit M (nuoM) (Buchnera aphidicola subsp. Schizaphis graminum (strain Sg)).